Here is a 427-residue protein sequence, read N- to C-terminus: Glutamate-1-semialdehyde 2,1-aminomutase (427 aa).

An N6-(pyridoxal phosphate)lysine modification is found at Lys-265.

This sequence belongs to the class-III pyridoxal-phosphate-dependent aminotransferase family. HemL subfamily. In terms of assembly, homodimer. The cofactor is pyridoxal 5'-phosphate.

The protein localises to the cytoplasm. The catalysed reaction is (S)-4-amino-5-oxopentanoate = 5-aminolevulinate. It participates in porphyrin-containing compound metabolism; protoporphyrin-IX biosynthesis; 5-aminolevulinate from L-glutamyl-tRNA(Glu): step 2/2. This is Glutamate-1-semialdehyde 2,1-aminomutase from Burkholderia orbicola (strain MC0-3).